Reading from the N-terminus, the 155-residue chain is MNASTETSIALPDINDIMRNLPHRYPMLLIDRVVAFSKRERLVGIKNVTINEPYFAGHFPQKPVMPGVLILESMAQACGMLAFKSEQEELGGNHIIYLVAIDKARFKRPVEPGDQLRLEASLKRVMRGLWMFQAQAWVGDALAAEAEIRCTVKEA.

Residue His-58 is part of the active site.

It belongs to the thioester dehydratase family. FabZ subfamily.

It is found in the cytoplasm. It carries out the reaction a (3R)-hydroxyacyl-[ACP] = a (2E)-enoyl-[ACP] + H2O. In terms of biological role, involved in unsaturated fatty acids biosynthesis. Catalyzes the dehydration of short chain beta-hydroxyacyl-ACPs and long chain saturated and unsaturated beta-hydroxyacyl-ACPs. The protein is 3-hydroxyacyl-[acyl-carrier-protein] dehydratase FabZ of Alkalilimnicola ehrlichii (strain ATCC BAA-1101 / DSM 17681 / MLHE-1).